Here is a 120-residue protein sequence, read N- to C-terminus: Small ribosomal subunit protein eS17 (120 aa).

It belongs to the eukaryotic ribosomal protein eS17 family. Component of the small ribosomal subunit.

The protein localises to the cytoplasm. This Encephalitozoon cuniculi (strain GB-M1) (Microsporidian parasite) protein is Small ribosomal subunit protein eS17 (RPS17).